The primary structure comprises 610 residues: Manganese lipoxygenase (610 aa).

The signal sequence occupies residues 1 to 16; that stretch reads MVALLIFLGIFTCVET. Residues 47–610 form the Lipoxygenase domain; the sequence is FTLPNEDDEI…PGVIPFYLSV (564 aa). N-linked (GlcNAc...) asparagine glycosylation is found at asparagine 157 and asparagine 259. Mn(2+)-binding residues include histidine 290 and histidine 295. Asparagine 386 is a glycosylation site (N-linked (GlcNAc...) asparagine). Positions 475 and 479 each coordinate Mn(2+). N-linked (GlcNAc...) asparagine glycosylation occurs at asparagine 540. Valine 610 is a binding site for Mn(2+).

Belongs to the lipoxygenase family. Manganese lipoxygenase subfamily. Mn(2+) serves as cofactor. Post-translationally, N- and O-glycosylated.

The protein localises to the secreted. The catalysed reaction is (9Z,12Z)-octadecadienoate + O2 = (11S)-hydroperoxy-(9Z,12Z)-octadecadienoate. It catalyses the reaction (9Z,12Z)-octadecadienoate + O2 = (11R)-hydroperoxy-(9Z,12Z)-octadecadienoate. It carries out the reaction (9Z,12Z)-octadecadienoate + O2 = (13S)-hydroperoxy-(9Z,11E)-octadecadienoate. The enzyme catalyses (9Z,12Z,15Z)-octadecatrienoate + O2 = (11S)-hydroperoxy-(9Z,12Z,15Z)-octadecatrienoate. Lipoxygenase that metabolizes linoleic and alpha-linolenic acids to 9-, 11- and 13-hydroperoxy fatty acids. Oxidizes linoleic acid to mainly 11R-, 13S- and racemic 9-HPODE, and alpha-linolenic acid to 11-HPOTrE. The polypeptide is Manganese lipoxygenase (Fusarium oxysporum (strain Fo5176) (Fusarium vascular wilt)).